The primary structure comprises 291 residues: N-acetylmannosamine kinase (291 aa).

Residues 5-12 and 132-139 contribute to the ATP site; these read AIDIGGTK and GVGGGVVC. Positions 156, 166, 168, and 173 each coordinate Zn(2+).

This sequence belongs to the ROK (NagC/XylR) family. NanK subfamily. Homodimer.

The catalysed reaction is an N-acyl-D-mannosamine + ATP = an N-acyl-D-mannosamine 6-phosphate + ADP + H(+). It functions in the pathway amino-sugar metabolism; N-acetylneuraminate degradation; D-fructose 6-phosphate from N-acetylneuraminate: step 2/5. Catalyzes the phosphorylation of N-acetylmannosamine (ManNAc) to ManNAc-6-P. The sequence is that of N-acetylmannosamine kinase from Salmonella arizonae (strain ATCC BAA-731 / CDC346-86 / RSK2980).